We begin with the raw amino-acid sequence, 332 residues long: Ribosomal RNA small subunit methyltransferase C (332 aa).

The protein belongs to the methyltransferase superfamily. RsmC family. In terms of assembly, monomer.

The protein localises to the cytoplasm. It carries out the reaction guanosine(1207) in 16S rRNA + S-adenosyl-L-methionine = N(2)-methylguanosine(1207) in 16S rRNA + S-adenosyl-L-homocysteine + H(+). In terms of biological role, specifically methylates the guanine in position 1207 of 16S rRNA in the 30S particle. The chain is Ribosomal RNA small subunit methyltransferase C from Pseudomonas syringae pv. tomato (strain ATCC BAA-871 / DC3000).